The primary structure comprises 153 residues: Pheromone-binding protein Gp-9 (153 aa).

An N-terminal signal peptide occupies residues methionine 1–alanine 19. 3 cysteine pairs are disulfide-bonded: cysteine 37-cysteine 77, cysteine 73-cysteine 129, and cysteine 118-cysteine 138.

It belongs to the PBP/GOBP family. In terms of assembly, homodimer.

The protein resides in the secreted. Functionally, colony queen number, a major feature of social organization, is associated with worker genotype for Gp-9. Colonies are headed by either a single reproductive queen (monogyne form) or multiple queens (polygyne form). Differences in worker Gp-9 genotypes between social forms may cause differences in workers' abilities to recognize queens and regulate their numbers. The polypeptide is Pheromone-binding protein Gp-9 (Solenopsis geminata (Tropical fire ant)).